The sequence spans 117 residues: UPF0122 protein TTE1463 (117 aa).

Belongs to the UPF0122 family.

Functionally, might take part in the signal recognition particle (SRP) pathway. This is inferred from the conservation of its genetic proximity to ftsY/ffh. May be a regulatory protein. This is UPF0122 protein TTE1463 from Caldanaerobacter subterraneus subsp. tengcongensis (strain DSM 15242 / JCM 11007 / NBRC 100824 / MB4) (Thermoanaerobacter tengcongensis).